We begin with the raw amino-acid sequence, 76 residues long: MMKLTCVLIIAVLFLTACQLTTAETRDEYRAVRSSDEVQNSRSTDDCSTAGCKNVPCCEGLVCTGPSQGPVCQPLA.

The N-terminal stretch at 1-23 (MMKLTCVLIIAVLFLTACQLTTA) is a signal peptide. Positions 24 to 42 (ETRDEYRAVRSSDEVQNSR) are excised as a propeptide. A disordered region spans residues 29 to 49 (YRAVRSSDEVQNSRSTDDCST). 3 disulfides stabilise this stretch: C47–C58, C52–C63, and C57–C72.

Belongs to the conotoxin O1 superfamily. As to expression, expressed by the venom duct.

It is found in the secreted. In Conus ventricosus (Mediterranean cone), this protein is Conotoxin VnMKLT2-013.